Consider the following 123-residue polypeptide: Class I hydrophobin 2 (123 aa).

Positions 1-16 are cleaved as a signal peptide; the sequence is MYAYTVIAFLAASVAA. Intrachain disulfides connect C35–C97, C43–C91, C44–C72, and C98–C116.

The protein belongs to the fungal hydrophobin family.

The protein resides in the secreted. Its subcellular location is the cell wall. Functionally, aerial growth, conidiation, and dispersal of filamentous fungi in the environment rely upon a capability of their secreting small amphipathic proteins called hydrophobins (HPBs) with low sequence identity. Class I can self-assemble into an outermost layer of rodlet bundles on aerial cell surfaces, conferring cellular hydrophobicity that supports fungal growth, development and dispersal; whereas Class II form highly ordered films at water-air interfaces through intermolecular interactions but contribute nothing to the rodlet structure. HYD1 and HYD2 are required for the structural integrity of the long aerial chains of microconidia. Does not seem to be important for the ability to cause seedling disease. This is Class I hydrophobin 2 from Gibberella moniliformis (Maize ear and stalk rot fungus).